The primary structure comprises 304 residues: KIN17-like protein (304 aa).

Residues W26 to H50 form a C2H2-type zinc finger. Disordered stretches follow at residues I204–N228 and L261–A291.

It belongs to the KIN17 family.

It localises to the nucleus. The protein resides in the nucleolus. The polypeptide is KIN17-like protein (Schizosaccharomyces pombe (strain 972 / ATCC 24843) (Fission yeast)).